A 959-amino-acid polypeptide reads, in one-letter code: Protein NLP7 (959 aa).

Residues 1 to 22 (MCEPDDNSARNGVTTQPSRSRE) are disordered. Over residues 9 to 18 (ARNGVTTQPS) the composition is skewed to polar residues. An RWP-RK domain is found at 578-659 (KKKTEKKRGK…IESVQGTDGG (82 aa)). The stretch at 633-654 (SRKIKKVNRSITKLKRVIESVQ) forms a coiled coil. Polar residues-rich tracts occupy residues 673 to 687 (THGQ…SPNG), 694 to 703 (PNTNNSPNHW), and 735 to 745 (GTPTSHGSCDG). Residues 673 to 760 (THGQTSAQPL…PKVPNQDPLF (88 aa)) form a disordered region. The region spanning 863–945 (TVTIKASYKD…KIVRLLVHDV (83 aa)) is the PB1 domain.

Interacts with NRG2. Expressed in roots, stems, leaves, flowers and siliques. Detected in root hairs, emerging secondary roots, vascular tissues, leaf parenchyma cells and stomata.

It is found in the nucleus. In terms of biological role, transcription factor involved in regulation of nitrate assimilation and in transduction of the nitrate signal. The sequence is that of Protein NLP7 (NLP7) from Arabidopsis thaliana (Mouse-ear cress).